A 427-amino-acid polypeptide reads, in one-letter code: Branched-chain-amino-acid aminotransferase, mitochondrial (427 aa).

Residues methionine 1–threonine 47 constitute a mitochondrion transit peptide. Lysine 256 carries the post-translational modification N6-(pyridoxal phosphate)lysine.

It belongs to the class-IV pyridoxal-phosphate-dependent aminotransferase family. Pyridoxal 5'-phosphate is required as a cofactor.

The protein resides in the mitochondrion. The protein localises to the nucleus. It is found in the cytoplasm. The enzyme catalyses L-leucine + 2-oxoglutarate = 4-methyl-2-oxopentanoate + L-glutamate. The catalysed reaction is L-isoleucine + 2-oxoglutarate = (S)-3-methyl-2-oxopentanoate + L-glutamate. It carries out the reaction L-valine + 2-oxoglutarate = 3-methyl-2-oxobutanoate + L-glutamate. Functionally, catalyzes the first reaction in the catabolism of the essential branched chain amino acids leucine, isoleucine, and valine. The sequence is that of Branched-chain-amino-acid aminotransferase, mitochondrial (eca39) from Schizosaccharomyces pombe (strain 972 / ATCC 24843) (Fission yeast).